Here is a 321-residue protein sequence, read N- to C-terminus: Probable E3 ubiquitin-protein ligase BAH1-like 1 (321 aa).

Residues 1–149 form the SPX domain; sequence MKFAKKYEKY…YSKQGQEFKA (149 aa). An RING-type zinc finger spans residues 217–266; sequence CSICLDTVFDPVALSCGHIYCYLCSCSAASVTIVDGLKSAERKSKCPLCR.

Belongs to the RING-type zinc finger family.

It carries out the reaction S-ubiquitinyl-[E2 ubiquitin-conjugating enzyme]-L-cysteine + [acceptor protein]-L-lysine = [E2 ubiquitin-conjugating enzyme]-L-cysteine + N(6)-ubiquitinyl-[acceptor protein]-L-lysine.. It functions in the pathway protein modification; protein ubiquitination. This chain is Probable E3 ubiquitin-protein ligase BAH1-like 1, found in Oryza sativa subsp. indica (Rice).